We begin with the raw amino-acid sequence, 374 residues long: Fibrous sheath-interacting protein 1 (374 aa).

3 disordered regions span residues 1–80, 95–120, and 225–244; these read MEVY…LEVL, EMTD…PEMR, and EVGQ…HSKS. Composition is skewed to basic and acidic residues over residues 12 to 28, 45 to 55, and 65 to 77; these read PHSR…RDKS, DIIKGRLDEIS, and ENRR…HRSL. Positions 262–290 form a coiled coil; sequence SVFLTQQEKERIEDLLKDLEEELLEEPQL.

This sequence belongs to the FSIP1 family.

The sequence is that of Fibrous sheath-interacting protein 1 (fsip1) from Danio rerio (Zebrafish).